Consider the following 726-residue polypeptide: Peroxisomal bifunctional enzyme (726 aa).

The segment at 1–284 (MAEYLRLPHS…FAERSAPKWS (284 aa)) is enoyl-CoA hydratase / isomerase. K38 is subject to N6-succinyllysine. G103 is a substrate binding site. K167 is modified (N6-acetyllysine; alternate). Position 167 is an N6-succinyllysine; alternate (K167). Residue K173 is modified to N6-acetyllysine. Position 185 is an N6-succinyllysine (K185). N6-acetyllysine; alternate is present on K221. K221 bears the N6-succinyllysine; alternate mark. K282, K292, and K333 each carry N6-succinyllysine. Residues 285–575 (TPSGASWKTA…DMLCELGRFG (291 aa)) are 3-hydroxyacyl-CoA dehydrogenase. 2 positions are modified to N6-acetyllysine: K348 and K352. The disordered stretch occupies residues 352 to 371 (KSRQQCGQQRSGPKPRFSSS). Over residues 353 to 371 (SRQQCGQQRSGPKPRFSSS) the composition is skewed to polar residues. N6-acetyllysine is present on K467. Position 535 is an N6-succinyllysine (K535). K587, K594, and K713 each carry N6-acetyllysine; alternate. An N6-succinyllysine; alternate mark is found at K587, K594, and K713. The Microbody targeting signal signature appears at 724-726 (SKL). Residue K725 is modified to N6-succinyllysine.

The protein in the N-terminal section; belongs to the enoyl-CoA hydratase/isomerase family. It in the C-terminal section; belongs to the 3-hydroxyacyl-CoA dehydrogenase family. In terms of assembly, monomer. In terms of processing, acetylated, leading to enhanced enzyme activity. Acetylation is enhanced by up to 80% after treatment either with trichostin A (TSA) or with nicotinamide (NAM) with highest increase on Lys-348. Acetylation and enzyme activity increased by about 1.5% on addition of fatty acids.

The protein localises to the peroxisome. It carries out the reaction a (3S)-3-hydroxyacyl-CoA = a (2E)-enoyl-CoA + H2O. The catalysed reaction is a 4-saturated-(3S)-3-hydroxyacyl-CoA = a (3E)-enoyl-CoA + H2O. It catalyses the reaction a (3Z)-enoyl-CoA = a 4-saturated (2E)-enoyl-CoA. The enzyme catalyses a (3E)-enoyl-CoA = a 4-saturated (2E)-enoyl-CoA. It carries out the reaction a (3S)-3-hydroxyacyl-CoA + NAD(+) = a 3-oxoacyl-CoA + NADH + H(+). The catalysed reaction is (2S,3S)-3-hydroxy-2-methylbutanoyl-CoA = (2E)-2-methylbut-2-enoyl-CoA + H2O. It catalyses the reaction (3S)-hydroxyhexadecanoyl-CoA + NAD(+) = 3-oxohexadecanoyl-CoA + NADH + H(+). The enzyme catalyses (3S)-hydroxyhexadecanoyl-CoA = (2E)-hexadecenoyl-CoA + H2O. It carries out the reaction (2E)-hexadecenedioyl-CoA + H2O = (3S)-hydroxyhexadecanedioyl-CoA. The catalysed reaction is (3S)-hydroxyhexadecanedioyl-CoA + NAD(+) = 3-oxohexadecanedioyl-CoA + NADH + H(+). It catalyses the reaction (3E,5Z)-tetradecadienoyl-CoA = (2E,5Z)-tetradecadienoyl-CoA. The enzyme catalyses (3E,5Z)-octadienoyl-CoA = (2E,5Z)-octadienoyl-CoA. It carries out the reaction (3S)-hydroxydecanoyl-CoA + NAD(+) = 3-oxodecanoyl-CoA + NADH + H(+). The catalysed reaction is (3E)-decenoyl-CoA = (2E)-decenoyl-CoA. It catalyses the reaction (3Z)-hexenoyl-CoA = (2E)-hexenoyl-CoA. The enzyme catalyses (3E)-hexenoyl-CoA = (2E)-hexenoyl-CoA. It carries out the reaction (3S)-hydroxydecanoyl-CoA = (2E)-decenoyl-CoA + H2O. The catalysed reaction is (3S)-hydroxyhexanoyl-CoA = (2E)-hexenoyl-CoA + H2O. Its pathway is lipid metabolism; fatty acid beta-oxidation. With respect to regulation, enzyme activity enhanced by acetylation. Functionally, peroxisomal trifunctional enzyme possessing 2-enoyl-CoA hydratase, 3-hydroxyacyl-CoA dehydrogenase, and delta 3, delta 2-enoyl-CoA isomerase activities. Catalyzes two of the four reactions of the long chain fatty acids peroxisomal beta-oxidation pathway. Can also use branched-chain fatty acids such as 2-methyl-2E-butenoyl-CoA as a substrate, which is hydrated into (2S,3S)-3-hydroxy-2-methylbutanoyl-CoA. Optimal isomerase for 2,5 double bonds into 3,5 form isomerization in a range of enoyl-CoA species. Also able to isomerize both 3-cis and 3-trans double bonds into the 2-trans form in a range of enoyl-CoA species. Regulates the amount of medium-chain dicarboxylic fatty acids which are essential regulators of all fatty acid oxidation pathways. Also involved in the degradation of long-chain dicarboxylic acids through peroxisomal beta-oxidation. The protein is Peroxisomal bifunctional enzyme (EHHADH) of Cavia porcellus (Guinea pig).